The chain runs to 72 residues: Translation initiation factor IF-1 (72 aa).

The S1-like domain occupies 1–72; sequence MAKEDNIEMQ…SKGRIVFRSR (72 aa).

The protein belongs to the IF-1 family. In terms of assembly, component of the 30S ribosomal translation pre-initiation complex which assembles on the 30S ribosome in the order IF-2 and IF-3, IF-1 and N-formylmethionyl-tRNA(fMet); mRNA recruitment can occur at any time during PIC assembly.

Its subcellular location is the cytoplasm. Functionally, one of the essential components for the initiation of protein synthesis. Stabilizes the binding of IF-2 and IF-3 on the 30S subunit to which N-formylmethionyl-tRNA(fMet) subsequently binds. Helps modulate mRNA selection, yielding the 30S pre-initiation complex (PIC). Upon addition of the 50S ribosomal subunit IF-1, IF-2 and IF-3 are released leaving the mature 70S translation initiation complex. In Sodalis glossinidius (strain morsitans), this protein is Translation initiation factor IF-1.